Here is a 213-residue protein sequence, read N- to C-terminus: MSFSDFSKVESIKSLNEFLADKSYIDGTTATQADVTVYKAFQKEFPQFTRWFNHIASFTEEFEDLPAGKAPAASGSAAAAAEEEDDEDVDLFGSDDEVDEEAEKLKQQRLAEYAAKKAAKGPKPAAKSIVTLDVKPWDDETDLDELLTNVKAIEMEGLTWGAHQWIPVGFGIKKLQINLVVEDALVSLDDLQAAVEEDEDHVQSTDIAAMQKL.

The span at 67–80 shows a compositional bias: low complexity; that stretch reads AGKAPAASGSAAAA. The disordered stretch occupies residues 67–88; that stretch reads AGKAPAASGSAAAAAEEEDDED.

This sequence belongs to the EF-1-beta/EF-1-delta family. As to quaternary structure, EF-1 is composed of 4 subunits: alpha, beta, delta, and gamma.

In terms of biological role, EF-1-beta and EF-1-delta stimulate the exchange of GDP bound to EF-1-alpha to GTP. The sequence is that of Elongation factor 1-beta (EFB1) from Candida albicans (strain WO-1) (Yeast).